The sequence spans 117 residues: Large ribosomal subunit protein bL20c (117 aa).

This sequence belongs to the bacterial ribosomal protein bL20 family.

It is found in the plastid. The protein resides in the chloroplast. Functionally, binds directly to 23S ribosomal RNA and is necessary for the in vitro assembly process of the 50S ribosomal subunit. It is not involved in the protein synthesizing functions of that subunit. The chain is Large ribosomal subunit protein bL20c from Lemna minor (Common duckweed).